An 835-amino-acid polypeptide reads, in one-letter code: Phenylalanine--tRNA ligase beta subunit (835 aa).

The tRNA-binding domain maps to 44 to 160 (PATTGPLVLG…ESGQPGDDAR (117 aa)). Positions 419–494 (PTMPSITMPV…RLEGLEAIPT (76 aa)) constitute a B5 domain. Mg(2+)-binding residues include Asp472, Asp478, Glu481, and Glu482. An FDX-ACB domain is found at 741–834 (SAFPALHQDI…AKERLGAEMR (94 aa)).

The protein belongs to the phenylalanyl-tRNA synthetase beta subunit family. Type 1 subfamily. In terms of assembly, tetramer of two alpha and two beta subunits. Requires Mg(2+) as cofactor.

The protein resides in the cytoplasm. It catalyses the reaction tRNA(Phe) + L-phenylalanine + ATP = L-phenylalanyl-tRNA(Phe) + AMP + diphosphate + H(+). The chain is Phenylalanine--tRNA ligase beta subunit from Corynebacterium efficiens (strain DSM 44549 / YS-314 / AJ 12310 / JCM 11189 / NBRC 100395).